The following is a 98-amino-acid chain: Citrate lyase acyl carrier protein (98 aa).

The residue at position 14 (Ser14) is an O-(phosphoribosyl dephospho-coenzyme A)serine.

The protein belongs to the CitD family. Oligomer with a subunit composition of (alpha,beta,gamma)6.

The protein resides in the cytoplasm. Covalent carrier of the coenzyme of citrate lyase. This chain is Citrate lyase acyl carrier protein, found in Escherichia coli O127:H6 (strain E2348/69 / EPEC).